Here is a 426-residue protein sequence, read N- to C-terminus: Isocitrate dehydrogenase [NADP] (426 aa).

Serine 123, asparagine 125, arginine 129, arginine 139, and arginine 162 together coordinate D-threo-isocitrate. Aspartate 312 lines the Mg(2+) pocket. NADP(+) is bound by residues 344 to 350 (HGTAWDI), asparagine 357, and lysine 404.

It belongs to the isocitrate and isopropylmalate dehydrogenases family. As to quaternary structure, homodimer. Requires Mg(2+) as cofactor. The cofactor is Mn(2+).

The enzyme catalyses D-threo-isocitrate + NADP(+) = 2-oxoglutarate + CO2 + NADPH. Catalyzes the oxidative decarboxylation of isocitrate to 2-oxoglutarate and carbon dioxide with the concomitant reduction of NADP(+). The protein is Isocitrate dehydrogenase [NADP] (icd) of Aquifex aeolicus (strain VF5).